Reading from the N-terminus, the 825-residue chain is Beta-glucosidase (825 aa).

Positions 1–20 are cleaved as a signal peptide; that stretch reads MLLPLYGLASFLVLSQAALV. N-linked (GlcNAc...) asparagine glycosylation is found at asparagine 21, asparagine 74, asparagine 97, asparagine 230, and asparagine 271. Aspartate 299 is a catalytic residue. 11 N-linked (GlcNAc...) asparagine glycosylation sites follow: asparagine 328, asparagine 335, asparagine 537, asparagine 550, asparagine 556, asparagine 578, asparagine 667, asparagine 690, asparagine 718, asparagine 733, and asparagine 761.

This sequence belongs to the glycosyl hydrolase 3 family. Homotetramer.

It catalyses the reaction Hydrolysis of terminal, non-reducing beta-D-glucosyl residues with release of beta-D-glucose.. It functions in the pathway glycan metabolism; cellulose degradation. The polypeptide is Beta-glucosidase (Wickerhamomyces anomalus (Yeast)).